The primary structure comprises 522 residues: Subtilisin-like protease 10 (522 aa).

Positions 1–19 (MFFFKGVVAVLSFFSAVNA) are cleaved as a signal peptide. The propeptide occupies 20-117 (APFMKPNNGT…VERDQIGTSQ (98 aa)). The Inhibitor I9 domain occupies 36 to 113 (SYIVLLKRDI…HVAHVERDQI (78 aa)). Residues 127–405 (NWGLGRLSNS…KLLVNGANGT (279 aa)) form the Peptidase S8 domain. Residues Asp-159 and His-190 each act as charge relay system in the active site. Asn-251 carries an N-linked (GlcNAc...) asparagine glycan. Catalysis depends on Ser-348, which acts as the Charge relay system. A compositionally biased stretch (polar residues) spans 383-397 (SASVKNPGPNTTNKL). The interval 383 to 515 (SASVKNPGPN…GWNRPMWWNR (133 aa)) is disordered. Asn-392 and Asn-403 each carry an N-linked (GlcNAc...) asparagine glycan. A compositionally biased stretch (pro residues) spans 432-459 (SQNPPPGQNPPPGQNPPPEQPAPSPPAN).

This sequence belongs to the peptidase S8 family.

It localises to the secreted. Its function is as follows. Secreted subtilisin-like serine protease with keratinolytic activity that contributes to pathogenicity. The chain is Subtilisin-like protease 10 (SUB10) from Trichophyton verrucosum (strain HKI 0517).